A 336-amino-acid chain; its full sequence is GTPase Obg (336 aa).

An Obg domain is found at 1-159 (MKFVDEATLI…KTLKLELKLL (159 aa)). The OBG-type G domain maps to 160-329 (ADVGLVGLPN…LIEAIFAQLR (170 aa)). GTP contacts are provided by residues 166–173 (GLPNAGKS), 191–195 (FTTLA), 213–216 (DIPG), 283–286 (NKMD), and 310–312 (SAI). The Mg(2+) site is built by Ser-173 and Thr-193.

Belongs to the TRAFAC class OBG-HflX-like GTPase superfamily. OBG GTPase family. As to quaternary structure, monomer. It depends on Mg(2+) as a cofactor.

It is found in the cytoplasm. Its function is as follows. An essential GTPase which binds GTP, GDP and possibly (p)ppGpp with moderate affinity, with high nucleotide exchange rates and a fairly low GTP hydrolysis rate. Plays a role in control of the cell cycle, stress response, ribosome biogenesis and in those bacteria that undergo differentiation, in morphogenesis control. The chain is GTPase Obg from Desulfatibacillum aliphaticivorans.